The primary structure comprises 167 residues: Dual specificity protein phosphatase 1B (167 aa).

The Tyrosine-protein phosphatase domain occupies 24–165 (DLSEIQQGLF…LQQFEKSIQG (142 aa)). The active-site Phosphocysteine intermediate is the C109.

Belongs to the protein-tyrosine phosphatase family. Non-receptor class dual specificity subfamily. Associates with MPK3 and MPK6. Interacts with MPK6 is promoted during HR-like responses triggered by fungal elicitors, whereas interaction with MPK3 in repressed. As to expression, expressed in flowers, seedlings, roots, leaves, and seeds. Present in stomata and meristematic cells.

The protein localises to the nucleus. It localises to the cytoplasm. It carries out the reaction O-phospho-L-tyrosyl-[protein] + H2O = L-tyrosyl-[protein] + phosphate. It catalyses the reaction O-phospho-L-seryl-[protein] + H2O = L-seryl-[protein] + phosphate. The catalysed reaction is O-phospho-L-threonyl-[protein] + H2O = L-threonyl-[protein] + phosphate. Has a dual specificity toward Ser/Thr and Tyr-containing proteins. Prevents biotic and abiotic stress responses, including ozone, oxidative stress and pathogen attacks; represses MAPK activities during hypersensitive response to limit the spread of the HR response after infection by necrotrophic pathogen such as Botrytis cinerea. May be also involved in ABA and salt responses. Dephosphorylates MPK3 and MPK6. The sequence is that of Dual specificity protein phosphatase 1B (DSPTP1B) from Arabidopsis thaliana (Mouse-ear cress).